Here is a 218-residue protein sequence, read N- to C-terminus: Nonsense-mediated decay protein 4 (218 aa).

It is found in the cytoplasm. Functionally, involved in nonsense-mediated decay of mRNAs containing premature stop codons. The chain is Nonsense-mediated decay protein 4 (NMD4) from Saccharomyces cerevisiae (strain ATCC 204508 / S288c) (Baker's yeast).